A 586-amino-acid polypeptide reads, in one-letter code: Protein translocase subunit SecD (586 aa).

6 helical membrane-spanning segments follow: residues L7 to W27, S418 to V438, V439 to F459, L465 to I485, T521 to W541, and G546 to I566.

The protein belongs to the SecD/SecF family. SecD subfamily. In terms of assembly, forms a complex with SecF. Part of the essential Sec protein translocation apparatus which comprises SecA, SecYEG and auxiliary proteins SecDF. Other proteins may also be involved.

It is found in the cell inner membrane. Part of the Sec protein translocase complex. Interacts with the SecYEG preprotein conducting channel. SecDF uses the proton motive force (PMF) to complete protein translocation after the ATP-dependent function of SecA. This is Protein translocase subunit SecD from Borreliella burgdorferi (strain ATCC 35210 / DSM 4680 / CIP 102532 / B31) (Borrelia burgdorferi).